Here is a 340-residue protein sequence, read N- to C-terminus: uncharacterized protein (340 aa).

Residues 58-307 (AALPFRYTVN…PSYREMLRER (250 aa)) form the Radical SAM core domain. C72, C76, and C79 together coordinate [4Fe-4S] cluster. Helical transmembrane passes span 140–160 (YALM…LSIL) and 243–263 (QLLG…GLHL).

The cofactor is [4Fe-4S] cluster.

Its subcellular location is the cell membrane. This is an uncharacterized protein from Mycobacterium tuberculosis (strain CDC 1551 / Oshkosh).